Consider the following 119-residue polypeptide: UPF0102 protein PM0647 (119 aa).

This sequence belongs to the UPF0102 family.

This is UPF0102 protein PM0647 from Pasteurella multocida (strain Pm70).